Consider the following 345-residue polypeptide: Molybdate/tungstate-binding protein WtpA (345 aa).

A signal peptide spans 1–27 (MREGGVMKKRLLALIVAFAVLTAGCLG). Molybdate is bound by residues 41 to 42 (GS), Ser-75, 160 to 162 (DPC), Glu-218, and Tyr-236. Tungstate is bound by residues 41–42 (GS), Ser-75, 160–162 (DPC), Glu-218, and Tyr-236.

The protein belongs to the bacterial solute-binding protein 1 family. WtpA subfamily. In terms of assembly, monomer. The complex is composed of two ATP-binding proteins (WtpC), two transmembrane proteins (WtpB) and a solute-binding protein (WtpA).

It localises to the cell membrane. Part of the ABC transporter complex WtpABC involved in molybdate/tungstate import. Binds tungstate and molybdate, with a preference for tungstate. The sequence is that of Molybdate/tungstate-binding protein WtpA from Pyrococcus furiosus (strain ATCC 43587 / DSM 3638 / JCM 8422 / Vc1).